The sequence spans 285 residues: MNPSYKGKVRDIYDLGDKLILSSSDRISAFDVVFPQLVPDKGKVLNRISVSWFEFFKDVPNHILETDVKYFPIPFQNHPDLEGRSVLVKKCKRIDYECVVRGYISGSGWKEYKNDGTLAGIKLPSGFKESQKLPEPVFTPAVKNDQGHDENISEKEMENRIGKELFNILKEKSISIFLRASEVVDKAGIILCDTKFEFGILDGQVILIDELLTPDSSRYWSTDTYSVGISPPSLDKQILRNYLETTSWNKMPPAPNLPAELIQELREKYQKIEDLILSCTSQKSK.

Belongs to the SAICAR synthetase family.

The enzyme catalyses 5-amino-1-(5-phospho-D-ribosyl)imidazole-4-carboxylate + L-aspartate + ATP = (2S)-2-[5-amino-1-(5-phospho-beta-D-ribosyl)imidazole-4-carboxamido]succinate + ADP + phosphate + 2 H(+). It functions in the pathway purine metabolism; IMP biosynthesis via de novo pathway; 5-amino-1-(5-phospho-D-ribosyl)imidazole-4-carboxamide from 5-amino-1-(5-phospho-D-ribosyl)imidazole-4-carboxylate: step 1/2. The polypeptide is Phosphoribosylaminoimidazole-succinocarboxamide synthase (Leptospira interrogans serogroup Icterohaemorrhagiae serovar copenhageni (strain Fiocruz L1-130)).